A 118-amino-acid chain; its full sequence is uncharacterized protein (118 aa).

The HTH hxlR-type domain maps to 6–104 (CGFEVTKEVI…WGGYYAEQEY (99 aa)).

This is an uncharacterized protein from Bacillus subtilis (strain 168).